The chain runs to 520 residues: Ribonuclease Y (520 aa).

The helical transmembrane segment at 5-25 (ITIISSLLFLIVGLVVGSLIF) threads the bilayer. Residues 70-127 (RTEIENELRGRRTETQKAENRLLQREENLDRKDTSLSKREATLERKEESISKRQQQIE) form a disordered region. The region spanning 210–273 (TVSVVTLPND…EIARIALEKL (64 aa)) is the KH domain. Positions 336-429 (VLNHSLEVSK…VAAADALSAA (94 aa)) constitute an HD domain.

Belongs to the RNase Y family.

It localises to the cell membrane. In terms of biological role, endoribonuclease that initiates mRNA decay. The protein is Ribonuclease Y of Listeria welshimeri serovar 6b (strain ATCC 35897 / DSM 20650 / CCUG 15529 / CIP 8149 / NCTC 11857 / SLCC 5334 / V8).